Here is a 124-residue protein sequence, read N- to C-terminus: Small ribosomal subunit protein eS6 (124 aa).

Belongs to the eukaryotic ribosomal protein eS6 family.

The protein is Small ribosomal subunit protein eS6 of Methanococcus maripaludis (strain DSM 14266 / JCM 13030 / NBRC 101832 / S2 / LL).